Consider the following 423-residue polypeptide: Histidine--tRNA ligase (423 aa).

Belongs to the class-II aminoacyl-tRNA synthetase family. In terms of assembly, homodimer.

It localises to the cytoplasm. The enzyme catalyses tRNA(His) + L-histidine + ATP = L-histidyl-tRNA(His) + AMP + diphosphate + H(+). This is Histidine--tRNA ligase from Haemophilus ducreyi (strain 35000HP / ATCC 700724).